Consider the following 94-residue polypeptide: ESAT-6-like protein EsxI (94 aa).

It belongs to the WXG100 family. ESAT-6 subfamily.

It is found in the secreted. This chain is ESAT-6-like protein EsxI, found in Mycobacterium tuberculosis (strain CDC 1551 / Oshkosh).